Reading from the N-terminus, the 196-residue chain is Rac-like GTP-binding protein RAC13 (196 aa).

13–20 (GDGAVGKT) serves as a coordination point for GTP. The Effector region signature appears at 35–43 (YVPTVFDNF). GTP-binding positions include 60 to 64 (DTAGQ) and 118 to 121 (TKLD). Cys-193 carries the post-translational modification Cysteine methyl ester. Residue Cys-193 is the site of S-geranylgeranyl cysteine attachment. A propeptide spans 194–196 (AFL) (removed in mature form).

This sequence belongs to the small GTPase superfamily. Rho family.

It localises to the cytoplasm. It is found in the membrane. In terms of biological role, could participate in a signal transduction pathway that controls cytoskeletal organization. Its function is as follows. Inactive GDP-bound Rho GTPases reside in the cytosol, are found in a complex with Rho GDP-dissociation inhibitors (Rho GDIs), and are released from the GDI protein in order to translocate to membranes upon activation. This is Rac-like GTP-binding protein RAC13 (RAC13) from Gossypium hirsutum (Upland cotton).